The primary structure comprises 121 residues: MIQQESFLTVADNSGAKRIQCIRVLGSNRRYAHVGDVIVAAVKDAMPNMSVKKSEVVKAVVVRTKATLRRDTGNSIRFDDNAAVLINEDKNPRGTRVFGPVARELRERNFTKIVSLAPEVI.

It belongs to the universal ribosomal protein uL14 family. As to quaternary structure, part of the 50S ribosomal subunit. Forms a cluster with proteins L3 and L19. In the 70S ribosome, L14 and L19 interact and together make contacts with the 16S rRNA in bridges B5 and B8.

Binds to 23S rRNA. Forms part of two intersubunit bridges in the 70S ribosome. The sequence is that of Large ribosomal subunit protein uL14 from Prochlorococcus marinus (strain MIT 9313).